The sequence spans 193 residues: NADH-quinone oxidoreductase subunit B (193 aa).

[4Fe-4S] cluster is bound by residues cysteine 49, cysteine 50, cysteine 115, and cysteine 144. The segment at phenylalanine 172–glutamate 193 is disordered.

The protein belongs to the complex I 20 kDa subunit family. In terms of assembly, NDH-1 is composed of 14 different subunits. Subunits NuoB, C, D, E, F, and G constitute the peripheral sector of the complex. [4Fe-4S] cluster is required as a cofactor.

The protein localises to the cell inner membrane. It carries out the reaction a quinone + NADH + 5 H(+)(in) = a quinol + NAD(+) + 4 H(+)(out). In terms of biological role, NDH-1 shuttles electrons from NADH, via FMN and iron-sulfur (Fe-S) centers, to quinones in the respiratory chain. The immediate electron acceptor for the enzyme in this species is believed to be ubiquinone. Couples the redox reaction to proton translocation (for every two electrons transferred, four hydrogen ions are translocated across the cytoplasmic membrane), and thus conserves the redox energy in a proton gradient. In Akkermansia muciniphila (strain ATCC BAA-835 / DSM 22959 / JCM 33894 / BCRC 81048 / CCUG 64013 / CIP 107961 / Muc), this protein is NADH-quinone oxidoreductase subunit B.